Here is a 207-residue protein sequence, read N- to C-terminus: Ribosomal RNA small subunit methyltransferase G (207 aa).

S-adenosyl-L-methionine-binding positions include glycine 73, leucine 78, 124-125 (VE), and arginine 139.

The protein belongs to the methyltransferase superfamily. RNA methyltransferase RsmG family.

It localises to the cytoplasm. It carries out the reaction guanosine(527) in 16S rRNA + S-adenosyl-L-methionine = N(7)-methylguanosine(527) in 16S rRNA + S-adenosyl-L-homocysteine. Its function is as follows. Specifically methylates the N7 position of guanine in position 527 of 16S rRNA. This chain is Ribosomal RNA small subunit methyltransferase G, found in Salmonella choleraesuis (strain SC-B67).